The primary structure comprises 233 residues: ATP synthase subunit a (233 aa).

5 consecutive transmembrane segments (helical) span residues 29-49 (FKHVFYTWCAMAILFSLGLIV), 86-106 (VFPLLGGIFLFILFQNLLGLV), 118-135 (TNAAMALFVFGYYNYQGL), 188-208 (VLFFLMAPIVGTLPVYFLFLL), and 209-229 (GKVLQAFIFFMLTMVYLKGAF).

This sequence belongs to the ATPase A chain family. As to quaternary structure, F-type ATPases have 2 components, CF(1) - the catalytic core - and CF(0) - the membrane proton channel. CF(1) has five subunits: alpha(3), beta(3), gamma(1), delta(1), epsilon(1). CF(0) has three main subunits: a(1), b(2) and c(9-12). The alpha and beta chains form an alternating ring which encloses part of the gamma chain. CF(1) is attached to CF(0) by a central stalk formed by the gamma and epsilon chains, while a peripheral stalk is formed by the delta and b chains.

The protein localises to the cell inner membrane. Its function is as follows. Key component of the proton channel; it plays a direct role in the translocation of protons across the membrane. The protein is ATP synthase subunit a of Nitratidesulfovibrio vulgaris (strain ATCC 29579 / DSM 644 / CCUG 34227 / NCIMB 8303 / VKM B-1760 / Hildenborough) (Desulfovibrio vulgaris).